The chain runs to 589 residues: Probable ATP-dependent RNA helicase DDX59 (589 aa).

Disordered regions lie at residues 1 to 36 (MFVP…QLEG) and 48 to 98 (KEAV…SKTQ). The span at 12 to 27 (NSNDDLKSCEAKKSKP) shows a compositional bias: basic and acidic residues. Lysine 26 participates in a covalent cross-link: Glycyl lysine isopeptide (Lys-Gly) (interchain with G-Cter in SUMO2). Serine 64 carries the phosphoserine modification. Over residues 80-91 (GVKDSHPSEEPV) the composition is skewed to basic and acidic residues. The HIT-type zinc finger occupies 104–133 (GEPVCVVCGRYGEYICDKTDEDVCSLECKA). Phosphoserine occurs at positions 156 and 160. Positions 203-231 (IDFEHCGFPETLNQNLKKSGYEVPTPIQM) match the Q motif motif. In terms of domain architecture, Helicase ATP-binding spans 234–375 (IPVGLLGRDI…DQLLHNPVRI (142 aa)). 247–254 (ADTGSGKT) contacts ATP. The DEAD box motif lies at 323-326 (VKAD). The Helicase C-terminal domain maps to 399–549 (KKKKLFEILN…ILPPQLLNSP (151 aa)).

It belongs to the DEAD box helicase family. DDX59 subfamily. Interacts (via HIT-type zinc finger) with the RUVBL1/RUVBL2 complex in the presence of ADP.

Its subcellular location is the cytoplasm. It is found in the nucleus. The catalysed reaction is ATP + H2O = ADP + phosphate + H(+). This Rattus norvegicus (Rat) protein is Probable ATP-dependent RNA helicase DDX59 (Ddx59).